Consider the following 414-residue polypeptide: Gamma-glutamyl phosphate reductase (414 aa).

It belongs to the gamma-glutamyl phosphate reductase family.

It is found in the cytoplasm. It carries out the reaction L-glutamate 5-semialdehyde + phosphate + NADP(+) = L-glutamyl 5-phosphate + NADPH + H(+). It functions in the pathway amino-acid biosynthesis; L-proline biosynthesis; L-glutamate 5-semialdehyde from L-glutamate: step 2/2. Its function is as follows. Catalyzes the NADPH-dependent reduction of L-glutamate 5-phosphate into L-glutamate 5-semialdehyde and phosphate. The product spontaneously undergoes cyclization to form 1-pyrroline-5-carboxylate. The polypeptide is Gamma-glutamyl phosphate reductase (Xanthomonas oryzae pv. oryzae (strain MAFF 311018)).